The sequence spans 291 residues: 4-hydroxy-tetrahydrodipicolinate synthase (291 aa).

Position 45 (Thr-45) interacts with pyruvate. Tyr-131 (proton donor/acceptor) is an active-site residue. Lys-159 serves as the catalytic Schiff-base intermediate with substrate. Ile-202 is a pyruvate binding site.

This sequence belongs to the DapA family. As to quaternary structure, homotetramer; dimer of dimers.

The protein resides in the cytoplasm. It catalyses the reaction L-aspartate 4-semialdehyde + pyruvate = (2S,4S)-4-hydroxy-2,3,4,5-tetrahydrodipicolinate + H2O + H(+). It functions in the pathway amino-acid biosynthesis; L-lysine biosynthesis via DAP pathway; (S)-tetrahydrodipicolinate from L-aspartate: step 3/4. Its function is as follows. Catalyzes the condensation of (S)-aspartate-beta-semialdehyde [(S)-ASA] and pyruvate to 4-hydroxy-tetrahydrodipicolinate (HTPA). This is 4-hydroxy-tetrahydrodipicolinate synthase from Methanococcoides burtonii (strain DSM 6242 / NBRC 107633 / OCM 468 / ACE-M).